The primary structure comprises 598 residues: Elongation factor 4 (598 aa).

The tr-type G domain occupies 4–186; it reads DHIRNFSIIA…AIVKRVPPPK (183 aa). GTP is bound by residues 16-21 and 133-136; these read DHGKST and NKID.

This sequence belongs to the TRAFAC class translation factor GTPase superfamily. Classic translation factor GTPase family. LepA subfamily.

Its subcellular location is the cell inner membrane. The enzyme catalyses GTP + H2O = GDP + phosphate + H(+). Required for accurate and efficient protein synthesis under certain stress conditions. May act as a fidelity factor of the translation reaction, by catalyzing a one-codon backward translocation of tRNAs on improperly translocated ribosomes. Back-translocation proceeds from a post-translocation (POST) complex to a pre-translocation (PRE) complex, thus giving elongation factor G a second chance to translocate the tRNAs correctly. Binds to ribosomes in a GTP-dependent manner. The sequence is that of Elongation factor 4 from Magnetococcus marinus (strain ATCC BAA-1437 / JCM 17883 / MC-1).